The sequence spans 133 residues: Profilin-1 (133 aa).

It belongs to the profilin family. In terms of assembly, occurs in many kinds of cells as a complex with monomeric actin in a 1:1 ratio. As to expression, ubiquitous.

It is found in the cytoplasm. It localises to the cytoskeleton. Functionally, binds to actin and affects the structure of the cytoskeleton. At high concentrations, profilin prevents the polymerization of actin, whereas it enhances it at low concentrations. By binding to PIP2, it inhibits the formation of IP3 and DG. This is Profilin-1 (PRO1) from Solanum lycopersicum (Tomato).